A 455-amino-acid chain; its full sequence is Pentatricopeptide repeat-containing protein At3g26630, chloroplastic (455 aa).

A chloroplast-targeting transit peptide spans 1-19 (MAAPSPSSPPNLLSPPPFR). PPR repeat units follow at residues 51-81 (DQLL…LQSP), 82-117 (STFT…QSQF), 118-152 (DKFT…GFFN), 153-187 (DVFF…SIVS), 188-214 (WTTM…MPMR), 215-249 (NVVS…DVKP), 250-284 (NEFT…GFVL), 285-315 (DCFL…MQGK), 316-350 (SLAT…ASVE), 352-387 (DAIT…GISP), and 388-418 (IREH…MDSD).

The protein belongs to the PPR family. PCMP-A subfamily.

The protein localises to the plastid. It localises to the chloroplast. The protein is Pentatricopeptide repeat-containing protein At3g26630, chloroplastic (PCMP-A6) of Arabidopsis thaliana (Mouse-ear cress).